The chain runs to 387 residues: Thermostable celloxylanase (387 aa).

The GH10 domain occupies 41–382 (AEDIPSLAEA…KPAFWAIVDP (342 aa)). Catalysis depends on Glu185, which acts as the Proton donor. Glu293 serves as the catalytic Nucleophile.

Belongs to the glycosyl hydrolase 10 (cellulase F) family.

The enzyme catalyses Endohydrolysis of (1-&gt;4)-beta-D-glucosidic linkages in cellulose, lichenin and cereal beta-D-glucans.. It carries out the reaction Endohydrolysis of (1-&gt;4)-beta-D-xylosidic linkages in xylans.. It functions in the pathway glycan degradation; xylan degradation. Functionally, active toward xylan, carboxymethylcellulose, P-nitrophenyl-beta-D-xylopyranoside and P-nitrophenyl-beta-D-cellobioside. This Thermoclostridium stercorarium (Clostridium stercorarium) protein is Thermostable celloxylanase (xynB).